The following is a 244-amino-acid chain: CTD nuclear envelope phosphatase 1 (244 aa).

Residues leucine 7 to arginine 29 traverse the membrane as a helical segment. One can recognise an FCP1 homology domain in the interval alanine 57–leucine 224.

Belongs to the dullard family. As to quaternary structure, (Microbial infection) Interacts with Chandipura virus matrix protein. In terms of assembly, interacts with CNEP1R1; the complex dephosphorylates LPIN1 and LPIN2. As to expression, muscle specific with lower expression in other metabolic tissues.

The protein localises to the endoplasmic reticulum membrane. The protein resides in the nucleus membrane. It catalyses the reaction O-phospho-L-seryl-[protein] + H2O = L-seryl-[protein] + phosphate. The catalysed reaction is O-phospho-L-threonyl-[protein] + H2O = L-threonyl-[protein] + phosphate. Functionally, serine/threonine protein phosphatase forming with CNEP1R1 an active phosphatase complex that dephosphorylates and may activate LPIN1 and LPIN2. LPIN1 and LPIN2 are phosphatidate phosphatases that catalyze the conversion of phosphatidic acid to diacylglycerol and control the metabolism of fatty acids at different levels. May indirectly modulate the lipid composition of nuclear and/or endoplasmic reticulum membranes and be required for proper nuclear membrane morphology and/or dynamics. May also indirectly regulate the production of lipid droplets and triacylglycerol. May antagonize BMP signaling. This is CTD nuclear envelope phosphatase 1 (CTDNEP1) from Homo sapiens (Human).